We begin with the raw amino-acid sequence, 225 residues long: Uracil phosphoribosyltransferase (225 aa).

36-40 (KGLVR) serves as a coordination point for GTP. Residues Arg-86, Arg-111, and 145-153 (DPMLATGST) contribute to the 5-phospho-alpha-D-ribose 1-diphosphate site. Residues Ile-210 and 215–217 (GDA) each bind uracil. 5-phospho-alpha-D-ribose 1-diphosphate is bound at residue Asp-216.

This sequence belongs to the UPRTase family. The cofactor is Mg(2+).

The enzyme catalyses UMP + diphosphate = 5-phospho-alpha-D-ribose 1-diphosphate + uracil. The protein operates within pyrimidine metabolism; UMP biosynthesis via salvage pathway; UMP from uracil: step 1/1. Its activity is regulated as follows. Allosterically activated by GTP. Functionally, catalyzes the conversion of uracil and 5-phospho-alpha-D-ribose 1-diphosphate (PRPP) to UMP and diphosphate. In Haloarcula marismortui (strain ATCC 43049 / DSM 3752 / JCM 8966 / VKM B-1809) (Halobacterium marismortui), this protein is Uracil phosphoribosyltransferase.